The sequence spans 281 residues: Polyamine aminopropyltransferase (281 aa).

In terms of domain architecture, PABS spans 2-237 (EIWYTEKLEL…GIIGFTFLSN (236 aa)). Gln-33 lines the S-methyl-5'-thioadenosine pocket. His-64 and Asp-88 together coordinate spermidine. S-methyl-5'-thioadenosine is bound by residues Glu-108 and 139–140 (DG). Asp-157 (proton acceptor) is an active-site residue. Position 157–160 (157–160 (DSSD)) interacts with spermidine. Pro-164 contributes to the S-methyl-5'-thioadenosine binding site.

Belongs to the spermidine/spermine synthase family. As to quaternary structure, homodimer or homotetramer.

It is found in the cytoplasm. The enzyme catalyses S-adenosyl 3-(methylsulfanyl)propylamine + putrescine = S-methyl-5'-thioadenosine + spermidine + H(+). The protein operates within amine and polyamine biosynthesis; spermidine biosynthesis; spermidine from putrescine: step 1/1. Functionally, catalyzes the irreversible transfer of a propylamine group from the amino donor S-adenosylmethioninamine (decarboxy-AdoMet) to putrescine (1,4-diaminobutane) to yield spermidine. In Leptospira biflexa serovar Patoc (strain Patoc 1 / Ames), this protein is Polyamine aminopropyltransferase.